Reading from the N-terminus, the 64-residue chain is Alpha-mammal toxin BmK-M8 (64 aa).

An LCN-type CS-alpha/beta domain is found at 2-64 (RDAYIADSEN…ERIKEPGKCG (63 aa)). Disulfide bonds link C12/C63, C16/C36, C22/C46, and C26/C48.

Belongs to the long (4 C-C) scorpion toxin superfamily. Sodium channel inhibitor family. Alpha subfamily. In terms of tissue distribution, expressed by the venom gland.

The protein resides in the secreted. Its function is as follows. Alpha toxins bind voltage-independently at site-3 of sodium channels (Nav) and inhibit the inactivation of the activated channels, thereby blocking neuronal transmission. This acidic toxin has a weak toxicity and is active against mammals. The sequence is that of Alpha-mammal toxin BmK-M8 from Olivierus martensii (Manchurian scorpion).